A 196-amino-acid chain; its full sequence is DNA replication complex GINS protein PSF1 (196 aa).

Belongs to the GINS1/PSF1 family. As to quaternary structure, component of the GINS complex which is a heterotetramer of GINS1, GINS2, GINS3 and GINS4. Forms a stable subcomplex with GINS4. GINS complex interacts with DNA primase in vitro. Component of the CMG helicase complex, a hexameric ring of related MCM2-7 subunits stabilized by CDC45 and the tetrameric GINS complex.

It localises to the nucleus. The protein resides in the chromosome. Functionally, required for correct functioning of the GINS complex, a complex that plays an essential role in the initiation of DNA replication, and progression of DNA replication forks. GINS complex is a core component of CDC45-MCM-GINS (CMG) helicase, the molecular machine that unwinds template DNA during replication, and around which the replisome is built. This is DNA replication complex GINS protein PSF1 (Gins1) from Mus musculus (Mouse).